The primary structure comprises 232 residues: Ubiquinone biosynthesis O-methyltransferase (232 aa).

S-adenosyl-L-methionine contacts are provided by Arg-36, Gly-55, Asp-76, and Leu-120.

This sequence belongs to the methyltransferase superfamily. UbiG/COQ3 family.

It catalyses the reaction a 3-demethylubiquinol + S-adenosyl-L-methionine = a ubiquinol + S-adenosyl-L-homocysteine + H(+). It carries out the reaction a 3-(all-trans-polyprenyl)benzene-1,2-diol + S-adenosyl-L-methionine = a 2-methoxy-6-(all-trans-polyprenyl)phenol + S-adenosyl-L-homocysteine + H(+). It functions in the pathway cofactor biosynthesis; ubiquinone biosynthesis. Functionally, O-methyltransferase that catalyzes the 2 O-methylation steps in the ubiquinone biosynthetic pathway. This chain is Ubiquinone biosynthesis O-methyltransferase, found in Pseudomonas fluorescens (strain Pf0-1).